The chain runs to 199 residues: dTTP/UTP pyrophosphatase (199 aa).

Residue D73 is the Proton acceptor of the active site.

This sequence belongs to the Maf family. YhdE subfamily. A divalent metal cation serves as cofactor.

The protein localises to the cytoplasm. The enzyme catalyses dTTP + H2O = dTMP + diphosphate + H(+). It catalyses the reaction UTP + H2O = UMP + diphosphate + H(+). Its function is as follows. Nucleoside triphosphate pyrophosphatase that hydrolyzes dTTP and UTP. May have a dual role in cell division arrest and in preventing the incorporation of modified nucleotides into cellular nucleic acids. The chain is dTTP/UTP pyrophosphatase from Caldicellulosiruptor bescii (strain ATCC BAA-1888 / DSM 6725 / KCTC 15123 / Z-1320) (Anaerocellum thermophilum).